The primary structure comprises 221 residues: Protein Thf1 (221 aa).

Residues 174–213 adopt a coiled-coil conformation; that stretch reads TKERVEKDVNLYKSSLDKIEKALELIEMNIKDEKRRNKER.

This sequence belongs to the THF1 family.

In terms of biological role, may be involved in photosynthetic membrane biogenesis. The sequence is that of Protein Thf1 from Prochlorococcus marinus (strain MIT 9211).